Here is a 1125-residue protein sequence, read N- to C-terminus: Protein efr-3 (1125 aa).

Disordered stretches follow at residues 240–261, 471–493, 788–819, and 845–1093; these read RTSNATAQPSETTGGEPGPNPI, RPSRPTSPPNSSPNGERSDNGAA, TSPPTSPTTSPGRNFTHPMLGSTLSATPKDET, and QAGS…LGEK. Residues 242-252 show a composition bias toward polar residues; the sequence is SNATAQPSETT. Residues 788–798 are compositionally biased toward low complexity; sequence TSPPTSPTTSP. A compositionally biased stretch (polar residues) spans 845-854; that stretch reads QAGSSQTASL. Positions 855–877 are enriched in low complexity; that stretch reads NGTNGTHRNTVNNNNRLGVNGVT. Composition is skewed to polar residues over residues 878–896, 975–1011, and 1046–1071; these read SPNGSNSNLRPSSSPTGPN, LSFNPAASGSRQGSPGNTSQAASSPPRRTSQDRTQQL, and SRTTSRTQPQATTAHTTLPRPSTSSK.

This sequence belongs to the EFR3 family.

This chain is Protein efr-3 (efr-3), found in Neurospora crassa (strain ATCC 24698 / 74-OR23-1A / CBS 708.71 / DSM 1257 / FGSC 987).